Consider the following 368-residue polypeptide: 3-dehydroquinate synthase (368 aa).

NAD(+)-binding positions include D71–K76, G105–D109, T129–T130, K142, K151, and T169–T172. Residues E184, H247, and H264 each coordinate Zn(2+).

Belongs to the sugar phosphate cyclases superfamily. Dehydroquinate synthase family. The cofactor is Co(2+). Requires Zn(2+) as cofactor. It depends on NAD(+) as a cofactor.

Its subcellular location is the cytoplasm. The catalysed reaction is 7-phospho-2-dehydro-3-deoxy-D-arabino-heptonate = 3-dehydroquinate + phosphate. Its pathway is metabolic intermediate biosynthesis; chorismate biosynthesis; chorismate from D-erythrose 4-phosphate and phosphoenolpyruvate: step 2/7. Catalyzes the conversion of 3-deoxy-D-arabino-heptulosonate 7-phosphate (DAHP) to dehydroquinate (DHQ). This is 3-dehydroquinate synthase from Cupriavidus necator (strain ATCC 17699 / DSM 428 / KCTC 22496 / NCIMB 10442 / H16 / Stanier 337) (Ralstonia eutropha).